A 284-amino-acid polypeptide reads, in one-letter code: Quinate/shikimate dehydrogenase (NAD(+)) (284 aa).

Shikimate-binding residues include serine 18 and threonine 70. L-quinate is bound by residues 18 to 20 (SRT) and threonine 70. Catalysis depends on tyrosine 73, which acts as the Proton acceptor. Residues lysine 74, asparagine 95, and aspartate 111 each contribute to the shikimate site. L-quinate-binding residues include lysine 74, asparagine 95, and aspartate 111. Residues 137–138 (GG), aspartate 159, arginine 164, 203–206 (TPMG), alanine 214, valine 229, and glycine 252 contribute to the NAD(+) site. Shikimate is bound at residue glutamine 259. Glutamine 259 contributes to the L-quinate binding site.

Belongs to the shikimate dehydrogenase family. Homodimer.

It catalyses the reaction L-quinate + NAD(+) = 3-dehydroquinate + NADH + H(+). It carries out the reaction shikimate + NAD(+) = 3-dehydroshikimate + NADH + H(+). The protein operates within metabolic intermediate biosynthesis; chorismate biosynthesis; chorismate from D-erythrose 4-phosphate and phosphoenolpyruvate: step 4/7. It participates in aromatic compound metabolism; 3,4-dihydroxybenzoate biosynthesis; 3-dehydroquinate from D-quinate (NAD(+) route). Its function is as follows. Involved in the biosynthesis of the chorismate, which leads to the biosynthesis of aromatic amino acids, and plays a key role in the quinate degradation pathway. Catalyzes the NAD(+)-dependent oxidation of both quinate and shikimate to 3-dehydroquinate and 3-dehydroshikimate, respectively. It can only use NAD. The sequence is that of Quinate/shikimate dehydrogenase (NAD(+)) from Corynebacterium efficiens (strain DSM 44549 / YS-314 / AJ 12310 / JCM 11189 / NBRC 100395).